Here is a 1997-residue protein sequence, read N- to C-terminus: Chromatin-remodeling ATPase INO80 (1997 aa).

Disordered regions lie at residues 1-378 (MDHF…AAPS), 397-579 (IAAP…AENE), and 674-858 (ERKK…EKVV). The span at 12–25 (PHFDEDGTEGRGDR) shows a compositional bias: basic and acidic residues. A compositionally biased stretch (pro residues) spans 32 to 41 (GPAPPPPPPR). The span at 49–64 (NPVSSNSAVQSQAAAA) shows a compositional bias: low complexity. Residues 89-107 (STNSMRATPHSSSSFNLRS) show a composition bias toward polar residues. Basic and acidic residues predominate over residues 108 to 117 (PTREPSEYRH). Low complexity-rich tracts occupy residues 118 to 156 (PLSS…SLSS), 203 to 230 (SLQA…PLSA), and 240 to 251 (SSSSQPPARASQ). Over residues 264–276 (SFRDRDSSVREKS) the composition is skewed to basic and acidic residues. Polar residues predominate over residues 288-297 (EASNGISGSS). The span at 298-317 (PRKDRDRDRDHRGTTRESQR) shows a compositional bias: basic and acidic residues. 2 stretches are compositionally biased toward polar residues: residues 318–340 (RSVS…SASN) and 366–378 (VDNT…AAPS). Residues 411–420 (SPRLSLRPPS) show a composition bias toward low complexity. Composition is skewed to polar residues over residues 433–442 (NPTNGTTSTA), 451–465 (SPPS…TNPS), and 472–481 (SFSNILSSSE). 2 stretches are compositionally biased toward basic and acidic residues: residues 500–519 (VPMK…EKKE) and 529–540 (RISDIRHSESTP). A coiled-coil region spans residues 666–735 (ERELFAEKER…VQQTRLILQK (70 aa)). The segment covering 689–707 (MATTMEAKAAALARASAAQ) has biased composition (low complexity). Residues 709–723 (EAERQKYMREAERAN) are compositionally biased toward basic and acidic residues. The segment covering 769 to 781 (TKGKGRAGARPKK) has biased composition (basic residues). Over residues 782 to 793 (SKEQKQAEKDAA) the composition is skewed to basic and acidic residues. A compositionally biased stretch (low complexity) spans 794–806 (EAAQAALDAGLEL). Positions 824–858 (APKEADVDKDKENKEPQEPKEPKEPKEKVIKEKVV) are enriched in basic and acidic residues. The DBINO domain maps to 881–1006 (IWRDLARKDV…SHFIGKKIKT (126 aa)). The region spanning 1130–1302 (VNLYEQGING…WALLHFIMPS (173 aa)) is the Helicase ATP-binding domain. Position 1143-1150 (1143-1150 (DEMGLGKT)) interacts with ATP. The short motif at 1253 to 1256 (DEAQ) is the DEAQ box element. A Helicase C-terminal domain is found at 1702 to 1858 (KLDELLRELK…GSSAAGGGVD (157 aa)). Residues 1891–1902 (ELLESGELDKMQ) show a composition bias toward basic and acidic residues. The disordered stretch occupies residues 1891–1986 (ELLESGELDK…GSKKAKTTKQ (96 aa)). A compositionally biased stretch (basic residues) spans 1903–1914 (KKSRGGNKRKRG). Basic and acidic residues predominate over residues 1919 to 1933 (EGKEVSLDEMYHEGE). Positions 1954 to 1967 (AAGGEGGDGKGAVG) are enriched in gly residues. Positions 1970–1985 (AKKRKTGGSKKAKTTK) are enriched in basic residues.

It belongs to the SNF2/RAD54 helicase family. Component of the INO80 chromatin-remodeling complex.

Its subcellular location is the nucleus. The enzyme catalyses ATP + H2O = ADP + phosphate + H(+). Its function is as follows. ATPase component of the INO80 complex which remodels chromatin by shifting nucleosomes and is involved in DNA repair. This Neurospora crassa (strain ATCC 24698 / 74-OR23-1A / CBS 708.71 / DSM 1257 / FGSC 987) protein is Chromatin-remodeling ATPase INO80 (crf2-1).